The chain runs to 92 residues: Small ribosomal subunit protein uS17 (92 aa).

This sequence belongs to the universal ribosomal protein uS17 family. In terms of assembly, part of the 30S ribosomal subunit.

Its function is as follows. One of the primary rRNA binding proteins, it binds specifically to the 5'-end of 16S ribosomal RNA. The protein is Small ribosomal subunit protein uS17 of Corynebacterium urealyticum (strain ATCC 43042 / DSM 7109).